We begin with the raw amino-acid sequence, 308 residues long: UPF0282 protein M164_2122 (308 aa).

This sequence belongs to the UPF0282 family.

The chain is UPF0282 protein M164_2122 from Saccharolobus islandicus (strain M.16.4 / Kamchatka #3) (Sulfolobus islandicus).